We begin with the raw amino-acid sequence, 152 residues long: Deoxyuridine 5'-triphosphate nucleotidohydrolase (152 aa).

Residues Arg-71–Gly-73, Asn-84, Leu-88–Asp-90, and Lys-98 each bind substrate.

The protein belongs to the dUTPase family. Mg(2+) serves as cofactor.

The enzyme catalyses dUTP + H2O = dUMP + diphosphate + H(+). Its pathway is pyrimidine metabolism; dUMP biosynthesis; dUMP from dCTP (dUTP route): step 2/2. This enzyme is involved in nucleotide metabolism: it produces dUMP, the immediate precursor of thymidine nucleotides and it decreases the intracellular concentration of dUTP so that uracil cannot be incorporated into DNA. The sequence is that of Deoxyuridine 5'-triphosphate nucleotidohydrolase from Legionella pneumophila (strain Paris).